The following is an 816-amino-acid chain: uncharacterized protein (816 aa).

Disordered regions lie at residues 1–81 and 391–411; these read MDVV…NSNN and LGSN…NNDF. Residues 28–44 are compositionally biased toward low complexity; it reads EVPPQRPRQQNRWKPWW. Residues 64–81 show a composition bias toward polar residues; that stretch reads QGRSSPTTDFQDSVNSNN. Phosphoserine occurs at positions 76 and 79. Residues 391–400 are compositionally biased toward low complexity; it reads LGSNSSTNEN.

This is an uncharacterized protein from Saccharomyces cerevisiae (strain ATCC 204508 / S288c) (Baker's yeast).